The chain runs to 309 residues: Small ribosomal subunit protein uS7m (309 aa).

Positions 39-86 are disordered; the sequence is DSTTSSRLPPRVQIQQQQQQRTQPYSTETTPPPNSNNGDLAGIEGQPP. Residues 51–61 are compositionally biased toward low complexity; it reads QIQQQQQQRTQ.

This sequence belongs to the universal ribosomal protein uS7 family. In terms of assembly, component of the mitochondrial small ribosomal subunit (mt-SSU). Mature N.crassa 74S mitochondrial ribosomes consist of a small (37S) and a large (54S) subunit. The 37S small subunit contains a 16S ribosomal RNA (16S mt-rRNA) and 32 different proteins. The 54S large subunit contains a 23S rRNA (23S mt-rRNA) and 42 different proteins.

Its subcellular location is the mitochondrion. Its function is as follows. Component of the mitochondrial ribosome (mitoribosome), a dedicated translation machinery responsible for the synthesis of mitochondrial genome-encoded proteins, including at least some of the essential transmembrane subunits of the mitochondrial respiratory chain. The mitoribosomes are attached to the mitochondrial inner membrane and translation products are cotranslationally integrated into the membrane. The polypeptide is Small ribosomal subunit protein uS7m (rsm7) (Neurospora crassa (strain ATCC 24698 / 74-OR23-1A / CBS 708.71 / DSM 1257 / FGSC 987)).